A 469-amino-acid chain; its full sequence is Transcriptional coactivator YAP1 (469 aa).

A compositionally biased stretch (pro residues) spans 1–21 (MEPAQQPPPQPAPQGPAPPSV). A disordered region spans residues 1–47 (MEPAQQPPPQPAPQGPAPPSVSPAGTPAAPPAPPAGHQVVHVRGDSE). A Phosphoserine modification is found at Ser-46. Thr-48 is modified (phosphothreonine). Residues 71-85 (MRLRKLPDSFFKPPE) adopt a coiled-coil conformation. Lys-75 is subject to N6-lactoyllysine. The tract at residues 76–99 (LPDSFFKPPEPKSHSRQASTDAGT) is disordered. 2 positions are modified to phosphoserine: Ser-90 and Ser-94. Phosphothreonine is present on residues Thr-95 and Thr-104. Residue Ser-112 is modified to Phosphoserine; by LATS1 and LATS2. Ser-113 and Ser-116 each carry phosphoserine. At Thr-136 the chain carries Phosphothreonine; by MAPK8 and MAPK9. Phosphoserine; by LATS1 and LATS2 is present on Ser-146. WW domains lie at 153-186 (VPLP…DPRK) and 212-245 (GPLP…DPRL). The disordered stretch occupies residues 258-290 (SAPVKQPPPLAPQSPQGGVLGGGSSNQQQQIQL). Phosphoserine occurs at positions 271 and 320. The tract at residues 273–469 (QGGVLGGGSS…LDKESFLTWL (197 aa)) is transactivation domain. The stretch at 280–325 (GSSNQQQQIQLQQLQMEKERLRLKQQELFRQELALRSQLPSLEQDG) forms a coiled coil. At Ser-333 the chain carries Phosphoserine; by MAPK8 and MAPK9. The span at 345–357 (TNSSDPFLNSGTY) shows a compositional bias: polar residues. The segment at 345–405 (TNSSDPFLNS…SQSTLPSQQS (61 aa)) is disordered. 3 positions are modified to phosphoserine: Ser-347, Ser-348, and Ser-354. The residue at position 363 (Ser-363) is a Phosphoserine; by LATS1 and LATS2. The segment covering 365 to 375 (DSGLSMSSYSI) has biased composition (polar residues). Residues Ser-366 and Ser-369 each carry the phosphoserine; by CK1 modification. Tyr-373 carries the phosphotyrosine; by ABL1 modification. Thr-378 is subject to Phosphothreonine; by MAPK8 and MAPK9. Positions 393–405 (DTISQSTLPSQQS) are enriched in polar residues.

The protein belongs to the YAP1 family. Part of a complex when phosphorylated that contains DSG3, PKP1, YAP1 and YWHAG; the complex is required for localization of DSG3 and YAP1 to the cell membrane in keratinocytes. Binds to the SH3 domain of the YES kinase. Binds to WBP1 and WBP2. Binds, in vitro, through the WW1 domain, to neural isoforms of ENAH that contain the PPSY motif. The phosphorylated form interacts with YWHAB. Interacts (via WW domains) with LATS1 (via PPxY motif 2). Interacts with LATS2. Interacts (via WW domain 1) with ERBB4 (via PPxY motif 2). Interacts with TEAD1, TEAD2, TEAD3 and TEAD4. Interacts with TP73. Interacts with RUNX1. Interacts with HCK. Interacts (via WW domains) with PTPN14 (via PPxY motif 2); this interaction leads to the cytoplasmic sequestration of YAP1 and inhibits its transcriptional coactivator activity. Interacts (when phosphorylated at Ser-112) with SMAD2, SMAD3 and WWTR1. Interacts with PRRG2 (via cytoplasmic domain). Interacts (via WW domains) with PRRG4 (via cytoplasmic domain). Interacts (phosphorylated) with CLDN18; the interaction sequesters YAP1 away from the nucleus and thereby restricts transcription of YAP1 target genes. Interacts with SMAD1. Interacts with AMOT; the interaction facilitates translocation of YAP1 to the cytoplasm and tight junctions. Interacts with AMOTL2, the interaction is required for ubiquitination of AMOTL2 and localization of YAP1 to tight junctions. Post-translationally, phosphorylated by LATS1 and LATS2; leading to cytoplasmic translocation and inactivation. Phosphorylated by ABL1; leading to YAP1 stabilization, enhanced interaction with TP73 and recruitment onto proapoptotic genes; in response to DNA damage. Phosphorylation at Ser-366 and Ser-369 by CK1 is triggered by previous phosphorylation at Ser-363 by LATS proteins and leads to YAP1 ubiquitination by SCF(beta-TRCP) E3 ubiquitin ligase and subsequent degradation. Phosphorylated at Thr-104, Thr-136, Ser-333 and Thr-378 by MAPK8/JNK1 and MAPK9/JNK2, which is required for the regulation of apoptosis by YAP1. In terms of processing, lactylation by AARS1 promotes nuclear localization and stabilization of YAP1, leading to increased Hippo signaling pathway. Delactylated by SIRT1. Ubiquitinated by SCF(beta-TRCP) E3 ubiquitin ligase. In terms of tissue distribution, highly specific to cortical neurons.

The protein localises to the cytoplasm. It is found in the nucleus. The protein resides in the cell junction. It localises to the tight junction. Its subcellular location is the cell membrane. Functionally, transcriptional regulator with dual roles as a coactivator and corepressor. Critical downstream regulatory target in the Hippo signaling pathway, crucial for organ size control and tumor suppression by restricting proliferation and promoting apoptosis. The Hippo signaling pathway core involves a kinase cascade featuring STK3/MST2 and STK4/MST1, along with its regulatory partner SAV1, which phosphorylates and activates LATS1/2 in complex with their regulatory protein, MOB1. This activation leads to the phosphorylation and inactivation of the YAP1 oncoprotein and WWTR1/TAZ. Phosphorylation of YAP1 by LATS1/2 prevents its nuclear translocation, thereby regulating the expression of its target genes. The transcriptional regulation of gene expression requires TEAD transcription factors and modulates cell growth, anchorage-independent growth, and induction of epithelial-mesenchymal transition (EMT). Plays a key role in tissue tension and 3D tissue shape by regulating the cortical actomyosin network, acting via ARHGAP18, a Rho GTPase activating protein that suppresses F-actin polymerization. It also suppresses ciliogenesis by acting as a transcriptional corepressor of TEAD4 target genes AURKA and PLK1. In conjunction with WWTR1, regulates TGFB1-dependent SMAD2 and SMAD3 nuclear accumulation. Synergizes with WBP2 to enhance PGR activity. Its function is as follows. Attenuates p73-mediated cell death signaling in transcriptional repression-induced atypical death (TRIAD) of neurons. This chain is Transcriptional coactivator YAP1 (Yap1), found in Rattus norvegicus (Rat).